The primary structure comprises 224 residues: Putative cytochrome c-type biogenesis protein DbsD-like (224 aa).

The next 5 helical transmembrane spans lie at 32-52 (FIFLSGLFTSLSPCIISILPV), 74-94 (FLFCLGTISSFITLGILATLI), 104-124 (GIPTISAVVIIYMGLNLLNIV), 150-170 (GIGIAISSCSTPIFVTLLVWI), and 176-196 (IFTGLIFILIYSIGYIFPIII).

It belongs to the DsbD family.

The protein resides in the plastid. It is found in the chloroplast membrane. Functionally, could be involved in cytochrome c synthesis. This Pyropia yezoensis (Susabi-nori) protein is Putative cytochrome c-type biogenesis protein DbsD-like.